Consider the following 182-residue polypeptide: Translation initiation factor IF-3 (182 aa).

The protein belongs to the IF-3 family. As to quaternary structure, monomer.

It is found in the cytoplasm. IF-3 binds to the 30S ribosomal subunit and shifts the equilibrium between 70S ribosomes and their 50S and 30S subunits in favor of the free subunits, thus enhancing the availability of 30S subunits on which protein synthesis initiation begins. The chain is Translation initiation factor IF-3 from Thermosynechococcus vestitus (strain NIES-2133 / IAM M-273 / BP-1).